Consider the following 37-residue polypeptide: Large ribosomal subunit protein bL36 (37 aa).

Belongs to the bacterial ribosomal protein bL36 family.

This Acidothermus cellulolyticus (strain ATCC 43068 / DSM 8971 / 11B) protein is Large ribosomal subunit protein bL36.